A 184-amino-acid polypeptide reads, in one-letter code: Peptide deformylase (184 aa).

Fe cation contacts are provided by cysteine 111 and histidine 154. Glutamate 155 is a catalytic residue. Histidine 158 provides a ligand contact to Fe cation.

It belongs to the polypeptide deformylase family. Fe(2+) is required as a cofactor.

It catalyses the reaction N-terminal N-formyl-L-methionyl-[peptide] + H2O = N-terminal L-methionyl-[peptide] + formate. Removes the formyl group from the N-terminal Met of newly synthesized proteins. Requires at least a dipeptide for an efficient rate of reaction. N-terminal L-methionine is a prerequisite for activity but the enzyme has broad specificity at other positions. The polypeptide is Peptide deformylase (Lactobacillus gasseri (strain ATCC 33323 / DSM 20243 / BCRC 14619 / CIP 102991 / JCM 1131 / KCTC 3163 / NCIMB 11718 / NCTC 13722 / AM63)).